Here is a 364-residue protein sequence, read N- to C-terminus: Cell cycle control protein 50A (364 aa).

Positions methionine 1 to proline 28 are disordered. Alanine 2 carries the N-acetylalanine modification. Over alanine 2 to threonine 49 the chain is Cytoplasmic. The chain crosses the membrane as a helical span at residues valine 50 to valine 70. Residues threonine 71–leucine 328 are Exoplasmic loop-facing. Disulfide bonds link cysteine 91/cysteine 104, cysteine 94/cysteine 102, and cysteine 157/cysteine 171. Asparagine 98 carries an N-linked (GlcNAc...) asparagine glycan. A glycan (N-linked (GlcNAc...) asparagine) is linked at asparagine 297. The helical transmembrane segment at glycine 329 to isoleucine 349 threads the bilayer. Residues asparagine 350 to isoleucine 364 lie on the Cytoplasmic side of the membrane.

Belongs to the CDC50/LEM3 family. As to quaternary structure, component of various P4-ATPase flippase complexes which consists of a catalytic alpha subunit and an accessory beta subunit. Interacts with ATP8A1 to form a flippase complex; this complex forms an intermediate phosphoenzyme. The ATP8A2:TMEM30A flippase complex has been purified, and ATP8B1:TMEM30A and ATP8B2:TMEM30A flippase complexes have been shown to form intermediate phosphoenzymes in vitro. Interacts with alpha subunits ATP8A1, ATP8B1, ATP8B2, ATP8B4, ATP10A, ATP10B, ATP10D, ATP11A, ATP11B and ATP11C. In terms of processing, N-glycosylated. Contains high mannose-type oligosaccharides. As to expression, expressed in photoreceptor cells; detected in retina outer segment (at protein level). Detected in hepatocytes liver sinusoidal endothelial cells and kidney brush border of the proximal tubules (at protein level). Expressed in brain (at protein level).

The protein localises to the membrane. It localises to the cell membrane. The protein resides in the golgi apparatus. It is found in the cytoplasmic vesicle. Its subcellular location is the secretory vesicle membrane. The protein localises to the apical cell membrane. Accessory component of a P4-ATPase flippase complex which catalyzes the hydrolysis of ATP coupled to the transport of aminophospholipids from the outer to the inner leaflet of various membranes and ensures the maintenance of asymmetric distribution of phospholipids. Phospholipid translocation also seems to be implicated in vesicle formation and in uptake of lipid signaling molecules. The beta subunit may assist in binding of the phospholipid substrate. Required for the proper folding, assembly and ER to Golgi exit of the ATP8A2:TMEM30A flippase complex. ATP8A2:TMEM30A may be involved in regulation of neurite outgrowth, and, reconstituted to liposomes, predomiminantly transports phosphatidylserine (PS) and to a lesser extent phosphatidylethanolamine (PE). The ATP8A1:TMEM30A flippase complex seems to play a role in regulation of cell migration probably involving flippase-mediated translocation of phosphatidylethanolamine (PE) at the plasma membrane. Required for the formation of the ATP8A2, ATP8B1 and ATP8B2 P-type ATPAse intermediate phosphoenzymes. Involved in uptake of platelet-activating factor (PAF). Can also mediate the export of alpha subunits ATP8A1, ATP8B1, ATP8B2, ATP8B4, ATP10A, ATP10B, ATP10D, ATP11A, ATP11B and ATP11C from the ER to other membrane localizations. This Mus musculus (Mouse) protein is Cell cycle control protein 50A.